Reading from the N-terminus, the 569-residue chain is Proline--tRNA ligase (569 aa).

This sequence belongs to the class-II aminoacyl-tRNA synthetase family. ProS type 1 subfamily. Homodimer.

The protein localises to the cytoplasm. The catalysed reaction is tRNA(Pro) + L-proline + ATP = L-prolyl-tRNA(Pro) + AMP + diphosphate. Catalyzes the attachment of proline to tRNA(Pro) in a two-step reaction: proline is first activated by ATP to form Pro-AMP and then transferred to the acceptor end of tRNA(Pro). As ProRS can inadvertently accommodate and process non-cognate amino acids such as alanine and cysteine, to avoid such errors it has two additional distinct editing activities against alanine. One activity is designated as 'pretransfer' editing and involves the tRNA(Pro)-independent hydrolysis of activated Ala-AMP. The other activity is designated 'posttransfer' editing and involves deacylation of mischarged Ala-tRNA(Pro). The misacylated Cys-tRNA(Pro) is not edited by ProRS. In Campylobacter jejuni subsp. jejuni serotype O:23/36 (strain 81-176), this protein is Proline--tRNA ligase.